The sequence spans 600 residues: Probable methyltransferase PMT21 (600 aa).

At 1 to 16 (MKYKDEKYEKAEKGSR) the chain is on the cytoplasmic side. A helical; Signal-anchor for type II membrane protein membrane pass occupies residues 17–37 (ILPKTVLLILLCGLSFYLGGL). Residues 38–600 (YCGKNIIEVS…YSSNASSETN (563 aa)) are Lumenal-facing. The N-linked (GlcNAc...) asparagine glycan is linked to N594.

It belongs to the methyltransferase superfamily.

It localises to the endoplasmic reticulum membrane. The protein is Probable methyltransferase PMT21 (ERD3) of Arabidopsis thaliana (Mouse-ear cress).